The sequence spans 609 residues: Sporulation-specific protein 21 (609 aa).

Disordered regions lie at residues 1 to 50 (MDNI…LENS), 68 to 96 (PASK…DGNS), and 124 to 165 (KLDS…SIKG). The span at 10-31 (MEGTSTMTVTSRSSEDSSCISN) shows a compositional bias: polar residues. Over residues 32-43 (HEQDTDTHKDGD) the composition is skewed to basic and acidic residues. The span at 68 to 81 (PASKSSRSIGSMKS) shows a compositional bias: low complexity. Polar residues-rich tracts occupy residues 82–96 (NQSL…DGNS) and 127–136 (STGSQRSKNN). Over residues 143–159 (SSTTSQTTCSSSSSSSS) the composition is skewed to low complexity. 3 coiled-coil regions span residues 283-342 (RTKI…DNES), 357-393 (RETL…ATNF), and 424-483 (ENLT…LLIE). The disordered stretch occupies residues 586–609 (DQKSNQNSSTPYKQSQRQVPHSIK). Residues 587-609 (QKSNQNSSTPYKQSQRQVPHSIK) are compositionally biased toward polar residues.

The protein belongs to the MPC70 family. As to quaternary structure, interacts directly with MPC54, NUD1 and SPC42. Interacts with ADY3. Interacts with ADY4. Probable component of a SPB complex composed of ADY3, SSP1, DON1, MPC54, SPO21/MPC70, NUD1 and CNM67.

Its subcellular location is the prospore membrane. It localises to the cytoplasm. It is found in the cytoskeleton. The protein localises to the spindle pole. In terms of biological role, involved in the pathway that organizes the shaping and sizing of the prospore membrane (PSM) during sporulation. May provide a meiosis-specific scaffold for the assembly of other proteins on spindle pole bodies (SPBs), and may be a limiting component for SPB formation. The sequence is that of Sporulation-specific protein 21 (SPO21) from Saccharomyces cerevisiae (strain ATCC 204508 / S288c) (Baker's yeast).